A 293-amino-acid chain; its full sequence is 33 kDa chaperonin (293 aa).

2 disulfides stabilise this stretch: Cys-230-Cys-232 and Cys-263-Cys-266.

The protein belongs to the HSP33 family. In terms of processing, under oxidizing conditions two disulfide bonds are formed involving the reactive cysteines. Under reducing conditions zinc is bound to the reactive cysteines and the protein is inactive.

The protein resides in the cytoplasm. Functionally, redox regulated molecular chaperone. Protects both thermally unfolding and oxidatively damaged proteins from irreversible aggregation. Plays an important role in the bacterial defense system toward oxidative stress. This chain is 33 kDa chaperonin, found in Edwardsiella ictaluri (strain 93-146).